The primary structure comprises 1037 residues: Sodium/potassium exporting P-type ATPase cta3 (1037 aa).

Topologically, residues 1–61 (MVTINISNPV…GVSAWKVLLR (61 aa)) are cytoplasmic. The helical transmembrane segment at 62-82 (QVLNAMCVVLILAAALSFGTT) threads the bilayer. Aspartate 83 is a topological domain (extracellular). A helical membrane pass occupies residues 84–104 (WIEGGVISAIIVLNITVGFIQ). Topologically, residues 105 to 281 (EYKAEKTMDS…LNVGTPLQRK (177 aa)) are cytoplasmic. A helical membrane pass occupies residues 282–302 (LTVLAYILFCIAIILAIIVMA). The Extracellular portion of the chain corresponds to 303–313 (AHSFHVTNEVS). Residues 314–334 (IYAISLGISIIPESLIAVLSI) traverse the membrane as a helical segment. Topologically, residues 335–760 (TMAMGQKNMS…GRRMFDNIMR (426 aa)) are cytoplasmic. Catalysis depends on aspartate 368, which acts as the 4-aspartylphosphate intermediate. Positions 368 and 370 each coordinate Mg(2+). ATP-binding residues include threonine 370, glutamate 468, lysine 520, arginine 559, threonine 620, glycine 621, aspartate 622, arginine 678, and lysine 684. Aspartate 703 is a binding site for Mg(2+). Asparagine 706 contributes to the ATP binding site. The helical transmembrane segment at 761–781 (FVLHLLVSNVGEVILLVVGLA) threads the bilayer. Topologically, residues 782–787 (FRDEVH) are extracellular. The chain crosses the membrane as a helical span at residues 788–808 (LSVFPMSPVEILWCNMITSSF). The Cytoplasmic segment spans residues 809–844 (PSMGLGMELAQPDVMERLPHDNKVGIFQKSLIVDMM). A helical transmembrane segment spans residues 845-865 (VYGFFLGVVSLMTWVVIMYGF). The Extracellular segment spans residues 866 to 889 (GTGNLSYDCNAHYHAGCNDVFKAR). N-linked (GlcNAc...) asparagine glycosylation occurs at asparagine 869. Residues 890 to 910 (SAVFAVVTFCILIMAVEVKNF) traverse the membrane as a helical segment. Residues 911–939 (DNSLFNLHGIPWGEWNFRYFLHTLVENKF) are Cytoplasmic-facing. The helical transmembrane segment at 940 to 960 (LAWAIALAAVSVFPTIYIPVI) threads the bilayer. Residues 961-969 (NRDVFKHTY) are Extracellular-facing. Residues 970 to 990 (IGWEWGVVAVAVMFYFFYVEI) traverse the membrane as a helical segment. The Cytoplasmic portion of the chain corresponds to 991–1037 (WKSIRRSLTNPQKKGKFRRTLSNTITTESKLSEKDLEHRLFLQSRRA). The residue at position 1012 (serine 1012) is a Phosphoserine.

It belongs to the cation transport ATPase (P-type) (TC 3.A.3) family. Type IID subfamily. Mg(2+) serves as cofactor. The active site is phosphorylated in presence of sodium or potassium and in conditions of higher pH. Not phosphorylated in presence of calcium ions.

Its subcellular location is the cell membrane. It carries out the reaction Na(+)(in) + ATP + H2O = Na(+)(out) + ADP + phosphate + H(+). It catalyses the reaction K(+)(in) + ATP + H2O = K(+)(out) + ADP + phosphate + H(+). In terms of biological role, catalyzes the hydrolysis of ATP coupled with the export of sodium and potassium from the cell. May export sodium less efficiently. May transport other cations such as lithium. Sodium/potassium efflux ATPases are involved in salt tolerance and maintaining the membrane potential across the plasma membrane in high salinity (Na+) or alkaline (K+) environments. The protein is Sodium/potassium exporting P-type ATPase cta3 of Schizosaccharomyces pombe (strain 972 / ATCC 24843) (Fission yeast).